Reading from the N-terminus, the 189-residue chain is ATP synthase subunit b (189 aa).

A helical transmembrane segment spans residues 23–43; it reads IEIVLSLVVFGLLLFAVWKFV.

Belongs to the ATPase B chain family. As to quaternary structure, F-type ATPases have 2 components, F(1) - the catalytic core - and F(0) - the membrane proton channel. F(1) has five subunits: alpha(3), beta(3), gamma(1), delta(1), epsilon(1). F(0) has three main subunits: a(1), b(2) and c(10-14). The alpha and beta chains form an alternating ring which encloses part of the gamma chain. F(1) is attached to F(0) by a central stalk formed by the gamma and epsilon chains, while a peripheral stalk is formed by the delta and b chains.

It is found in the cell membrane. Functionally, f(1)F(0) ATP synthase produces ATP from ADP in the presence of a proton or sodium gradient. F-type ATPases consist of two structural domains, F(1) containing the extramembraneous catalytic core and F(0) containing the membrane proton channel, linked together by a central stalk and a peripheral stalk. During catalysis, ATP synthesis in the catalytic domain of F(1) is coupled via a rotary mechanism of the central stalk subunits to proton translocation. In terms of biological role, component of the F(0) channel, it forms part of the peripheral stalk, linking F(1) to F(0). The polypeptide is ATP synthase subunit b (Nocardioides sp. (strain ATCC BAA-499 / JS614)).